Consider the following 231-residue polypeptide: Sugar fermentation stimulation protein homolog (231 aa).

This sequence belongs to the SfsA family.

The sequence is that of Sugar fermentation stimulation protein homolog from Geotalea uraniireducens (strain Rf4) (Geobacter uraniireducens).